The primary structure comprises 607 residues: Elongation factor 4 (607 aa).

Positions 11-193 (ENIRNFSIIA…KIVDVVPAPD (183 aa)) constitute a tr-type G domain. GTP is bound by residues 23-28 (DHGKST) and 140-143 (NKID).

This sequence belongs to the TRAFAC class translation factor GTPase superfamily. Classic translation factor GTPase family. LepA subfamily.

The protein localises to the cell membrane. The catalysed reaction is GTP + H2O = GDP + phosphate + H(+). Required for accurate and efficient protein synthesis under certain stress conditions. May act as a fidelity factor of the translation reaction, by catalyzing a one-codon backward translocation of tRNAs on improperly translocated ribosomes. Back-translocation proceeds from a post-translocation (POST) complex to a pre-translocation (PRE) complex, thus giving elongation factor G a second chance to translocate the tRNAs correctly. Binds to ribosomes in a GTP-dependent manner. The chain is Elongation factor 4 from Staphylococcus epidermidis (strain ATCC 35984 / DSM 28319 / BCRC 17069 / CCUG 31568 / BM 3577 / RP62A).